A 111-amino-acid chain; its full sequence is MTLDPNVAARLKRNAEGLFTAVVQERGSGDVLMVAWMDDDALDRTLKTREATYYSRSRGEQWVKGATSGHTQHVHSVRLDCDGDTVLLTVDQVGGACHTGDHTCFDATVLL.

Asp80 is a Mg(2+) binding site. Cys81 provides a ligand contact to Zn(2+). Asp82 and Asp84 together coordinate Mg(2+). The Zn(2+) site is built by Cys97 and Cys104.

It belongs to the PRA-CH family. Homodimer. The cofactor is Mg(2+). Zn(2+) serves as cofactor.

It is found in the cytoplasm. The enzyme catalyses 1-(5-phospho-beta-D-ribosyl)-5'-AMP + H2O = 1-(5-phospho-beta-D-ribosyl)-5-[(5-phospho-beta-D-ribosylamino)methylideneamino]imidazole-4-carboxamide. The protein operates within amino-acid biosynthesis; L-histidine biosynthesis; L-histidine from 5-phospho-alpha-D-ribose 1-diphosphate: step 3/9. Its function is as follows. Catalyzes the hydrolysis of the adenine ring of phosphoribosyl-AMP. This is Phosphoribosyl-AMP cyclohydrolase from Mycobacterium marinum (strain ATCC BAA-535 / M).